Reading from the N-terminus, the 193-residue chain is Peptidyl-tRNA hydrolase (193 aa).

Tyr15 provides a ligand contact to tRNA. His20 (proton acceptor) is an active-site residue. TRNA contacts are provided by Phe65, Asn67, and Asn113.

Belongs to the PTH family. Monomer.

The protein resides in the cytoplasm. The enzyme catalyses an N-acyl-L-alpha-aminoacyl-tRNA + H2O = an N-acyl-L-amino acid + a tRNA + H(+). Its function is as follows. Hydrolyzes ribosome-free peptidyl-tRNAs (with 1 or more amino acids incorporated), which drop off the ribosome during protein synthesis, or as a result of ribosome stalling. Catalyzes the release of premature peptidyl moieties from peptidyl-tRNA molecules trapped in stalled 50S ribosomal subunits, and thus maintains levels of free tRNAs and 50S ribosomes. This chain is Peptidyl-tRNA hydrolase, found in Ehrlichia ruminantium (strain Welgevonden).